The chain runs to 34 residues: PRRRRQASRPVRRRRRTRRSTAERRRRRVVRRRR.

Residues 1–34 (PRRRRQASRPVRRRRRTRRSTAERRRRRVVRRRR) are disordered.

Testis.

It localises to the nucleus. The protein resides in the chromosome. In terms of biological role, protamines substitute for histones in the chromatin of sperm during the haploid phase of spermatogenesis. They compact sperm DNA into a highly condensed, stable and inactive complex. This Dicentrarchus labrax (European seabass) protein is Protamine.